The following is a 273-amino-acid chain: Ribosomal protein L11 methyltransferase (273 aa).

S-adenosyl-L-methionine is bound by residues threonine 112, glycine 133, aspartate 155, and asparagine 203.

Belongs to the methyltransferase superfamily. PrmA family.

The protein localises to the cytoplasm. The catalysed reaction is L-lysyl-[protein] + 3 S-adenosyl-L-methionine = N(6),N(6),N(6)-trimethyl-L-lysyl-[protein] + 3 S-adenosyl-L-homocysteine + 3 H(+). Its function is as follows. Methylates ribosomal protein L11. The protein is Ribosomal protein L11 methyltransferase of Deinococcus radiodurans (strain ATCC 13939 / DSM 20539 / JCM 16871 / CCUG 27074 / LMG 4051 / NBRC 15346 / NCIMB 9279 / VKM B-1422 / R1).